The following is a 411-amino-acid chain: Adherens junction-associated protein 1 (411 aa).

The signal sequence occupies residues 1–43; that stretch reads MWIQQLLGLSSMPIRWPGRSLGSHLWILIAMLQLAVDFPSCDS. The Extracellular segment spans residues 44-283; it reads LGPGPEFRLL…GETSGLAVHQ (240 aa). Low complexity-rich tracts occupy residues 62-76, 121-145, and 247-264; these read LWSL…LPTP, PPAA…AGAA, and TPVG…SNNG. Disordered stretches follow at residues 62 to 156 and 242 to 270; these read LWSL…RGRR and DPWK…IQPP. A helical membrane pass occupies residues 284-304; the sequence is IITITVSLIMVIAALITTLVL. Residues 304–411 form a targeting signals region; it reads LKNCCAPSGH…VSEKWFEISC (108 aa). Residues 305–411 lie on the Cytoplasmic side of the membrane; it reads KNCCAPSGHT…VSEKWFEISC (107 aa).

Forms a complex with CDH1 and CTNNB1; interacts directly with CTNNB1. Interacts with AP1M2 and with isoform 2 of BSG/CD147.

Its subcellular location is the basolateral cell membrane. It is found in the apical cell membrane. It localises to the cell junction. The protein localises to the adherens junction. Its function is as follows. Plays a role in cell adhesion and cell migration. This chain is Adherens junction-associated protein 1 (Ajap1), found in Rattus norvegicus (Rat).